The chain runs to 249 residues: 4-hydroxy-tetrahydrodipicolinate reductase (249 aa).

Residues 77–79 and 101–104 each bind NAD(+); these read ATT and SYNT. The Proton donor/acceptor role is filled by histidine 133. A (S)-2,3,4,5-tetrahydrodipicolinate-binding site is contributed by histidine 134. The active-site Proton donor is the lysine 137. 143-144 contacts (S)-2,3,4,5-tetrahydrodipicolinate; sequence GT.

This sequence belongs to the DapB family.

It localises to the cytoplasm. It catalyses the reaction (S)-2,3,4,5-tetrahydrodipicolinate + NAD(+) + H2O = (2S,4S)-4-hydroxy-2,3,4,5-tetrahydrodipicolinate + NADH + H(+). The catalysed reaction is (S)-2,3,4,5-tetrahydrodipicolinate + NADP(+) + H2O = (2S,4S)-4-hydroxy-2,3,4,5-tetrahydrodipicolinate + NADPH + H(+). Its pathway is amino-acid biosynthesis; L-lysine biosynthesis via DAP pathway; (S)-tetrahydrodipicolinate from L-aspartate: step 4/4. Catalyzes the conversion of 4-hydroxy-tetrahydrodipicolinate (HTPA) to tetrahydrodipicolinate. The chain is 4-hydroxy-tetrahydrodipicolinate reductase from Exiguobacterium sp. (strain ATCC BAA-1283 / AT1b).